We begin with the raw amino-acid sequence, 429 residues long: Adenylosuccinate synthetase (429 aa).

GTP is bound by residues 12–18 (GDEGKGK) and 40–42 (GHT). Residue D13 is the Proton acceptor of the active site. 2 residues coordinate Mg(2+): D13 and G40. IMP contacts are provided by residues 13–16 (DEGK), 38–41 (NAGH), T128, R142, Q223, T238, and R302. Residue H41 is the Proton donor of the active site. 298-304 (TTTGRPR) serves as a coordination point for substrate. GTP-binding positions include R304, 330-332 (SID), and 412-414 (SVG).

The protein belongs to the adenylosuccinate synthetase family. In terms of assembly, homodimer. Mg(2+) serves as cofactor.

Its subcellular location is the cytoplasm. It carries out the reaction IMP + L-aspartate + GTP = N(6)-(1,2-dicarboxyethyl)-AMP + GDP + phosphate + 2 H(+). It participates in purine metabolism; AMP biosynthesis via de novo pathway; AMP from IMP: step 1/2. Plays an important role in the de novo pathway of purine nucleotide biosynthesis. Catalyzes the first committed step in the biosynthesis of AMP from IMP. The protein is Adenylosuccinate synthetase of Exiguobacterium sp. (strain ATCC BAA-1283 / AT1b).